The following is a 617-amino-acid chain: Serine/threonine-protein phosphatase 2A activator 1 (617 aa).

Over residues 1–11 (MDPTSKRPPPA) the composition is skewed to pro residues. Disordered stretches follow at residues 1 to 25 (MDPTSKRPPPAASSSTTYPPLPKLE), 84 to 169 (VSTS…ESES), 230 to 261 (GAGGEKKEEEEGTETETETETEGDSDKKTNEQ), 376 to 398 (SSPNEPTPLEGSVPNAPKPSDIT), and 572 to 617 (RFTP…PWTK). Polar residues predominate over residues 84–93 (VSTSEPTTDG). The span at 94 to 104 (QQQQQQQQQRQ) shows a compositional bias: low complexity. A compositionally biased stretch (acidic residues) spans 239-252 (EEGTETETETETEG).

This sequence belongs to the PTPA-type PPIase family.

Its subcellular location is the cytoplasm. The protein localises to the nucleus. The enzyme catalyses [protein]-peptidylproline (omega=180) = [protein]-peptidylproline (omega=0). Functionally, PPIases accelerate the folding of proteins. It catalyzes the cis-trans isomerization of proline imidic peptide bonds in oligopeptides. Acts as a regulatory subunit for PP2A-like phosphatases modulating their activity or substrate specificity, probably by inducing a conformational change in the catalytic subunit, a direct target of the PPIase. Can reactivate inactive phosphatase PP2A-phosphatase methylesterase complexes (PP2Ai) in presence of ATP and Mg(2+) by dissociating the inactive form from the complex. In Neurospora crassa (strain ATCC 24698 / 74-OR23-1A / CBS 708.71 / DSM 1257 / FGSC 987), this protein is Serine/threonine-protein phosphatase 2A activator 1 (rrd-1).